The sequence spans 306 residues: Recombination-associated protein RdgC (306 aa).

Belongs to the RdgC family.

Its subcellular location is the cytoplasm. It is found in the nucleoid. May be involved in recombination. This Pseudomonas aeruginosa (strain LESB58) protein is Recombination-associated protein RdgC.